A 338-amino-acid polypeptide reads, in one-letter code: Mitotic spindle-associated protein SHE1 (338 aa).

Over residues 1–14 (MNDKLQEEHNEKDT) the composition is skewed to basic and acidic residues. Disordered stretches follow at residues 1-29 (MNDKLQEEHNEKDTTSQINGFTPPHMSID), 67-88 (LKDQSEQQYNGDKNNEPKSGSY), and 116-146 (HTPKRKSQHAIPQDRSDSMKRSRPSRSIPYT). Residues 72–88 (EQQYNGDKNNEPKSGSY) show a composition bias toward polar residues. Residue Ser165 is modified to Phosphoserine. Disordered stretches follow at residues 210 to 263 (TNSL…QGTN) and 284 to 338 (RSTS…PIWR). A compositionally biased stretch (low complexity) spans 216–234 (INSAHRNTSSSSTASSIPR). The segment covering 242 to 254 (SIRDLHAKTKPVE) has biased composition (basic and acidic residues). 2 stretches are compositionally biased toward polar residues: residues 284 to 297 (RSTSMNNLSSGTSA) and 312 to 330 (SKTSGSLSSNLKQSTATGT).

The protein belongs to the SHE1 family.

The protein resides in the cytoplasm. It localises to the cytoskeleton. Its subcellular location is the spindle. It is found in the bud neck. Functionally, may have a role related to the spindle integrity function of the DAM1 complex, which is essential for proper chromosome segregation. Causes growth arrest when highly overexpressed. The chain is Mitotic spindle-associated protein SHE1 (SHE1) from Saccharomyces cerevisiae (strain YJM789) (Baker's yeast).